Here is a 475-residue protein sequence, read N- to C-terminus: Equilibrative nucleoside transporter 3 (475 aa).

Residues 1-51 are Cytoplasmic-facing; sequence MAFASEDNVYHSSNAVYRAPSNHQEADQEALLGKLLDYPAPGLQRPEDRFN. Ser21 carries the post-translational modification Phosphoserine. Residues 31-32 carry the Dileucine internalization motif motif; it reads LL. Residues 52-72 form a helical membrane-spanning segment; the sequence is GAYIIFFCLGIGGLLPWNFFV. At 73–105 the chain is on the extracellular side; the sequence is TAKEYWAYKLRNCSSPASGEDPEDMDILNYFES. The N-linked (GlcNAc...) asparagine glycan is linked to Asn84. A helical membrane pass occupies residues 106-126; sequence YLAVASTVPSLLFLVANFLLV. Topologically, residues 127–134 are cytoplasmic; the sequence is NRVQVHVR. Residues 135-155 traverse the membrane as a helical segment; the sequence is VLASLSVSLAIFVVMIVLVKV. Topologically, residues 156-162 are extracellular; sequence DTSSWTR. Residues 163–183 traverse the membrane as a helical segment; the sequence is GFFSLTIACMAIISSSSTIFN. At 184–199 the chain is on the cytoplasmic side; that stretch reads SSVYGLTGSFPMRNAQ. Residues 200–220 traverse the membrane as a helical segment; the sequence is ALISGGAMGGTVSAVALLVDL. At 221–230 the chain is on the extracellular side; the sequence is AASSDVRDST. Residues 231–251 form a helical membrane-spanning segment; sequence LAFFLMAAVFLGLCMGLYLLL. The Cytoplasmic portion of the chain corresponds to 252 to 305; sequence SQLEYARYYMRPVAPVRVFSGEDNPSQDAPSASSVAPASRVMHTPPLGPILKKT. The helical transmembrane segment at 306 to 326 threads the bilayer; that stretch reads ASLGFCAVSLYFVTAFIIPAI. At 327–340 the chain is on the extracellular side; sequence STNIQSMHKGTGSP. The helical transmembrane segment at 341-361 threads the bilayer; it reads WTSKFFVPLTVFLLFNFADLC. Residues 362–377 are Cytoplasmic-facing; it reads GRQVTAWIQVPGPRSK. Residues 378 to 398 form a helical membrane-spanning segment; sequence LLPGLVVSRFCLVPLFLLCNY. At 399-415 the chain is on the extracellular side; sequence QPRSHLTKVLFQSDIYP. A helical transmembrane segment spans residues 416 to 436; sequence VLFTCLLGLSNGYLSTLVLIY. Over 437 to 450 the chain is Cytoplasmic; sequence GPKIVPRELAEATS. A helical transmembrane segment spans residues 451–471; sequence VVMLFYMSVGLMLGSACAALL. Topologically, residues 472–475 are extracellular; sequence EHFI.

It belongs to the SLC29A/ENT transporter (TC 2.A.57) family. In terms of tissue distribution, expressed in macrophages.

It localises to the lysosome membrane. It is found in the late endosome membrane. Its subcellular location is the mitochondrion membrane. The protein resides in the cell membrane. The enzyme catalyses adenosine(in) = adenosine(out). It catalyses the reaction guanosine(in) = guanosine(out). It carries out the reaction inosine(in) = inosine(out). The catalysed reaction is uridine(out) = uridine(in). The enzyme catalyses cytidine(in) = cytidine(out). It catalyses the reaction thymidine(in) = thymidine(out). It carries out the reaction 2'-deoxyadenosine(in) = 2'-deoxyadenosine(out). The catalysed reaction is 2'-deoxycytidine(in) = 2'-deoxycytidine(out). The enzyme catalyses guanine(out) = guanine(in). It catalyses the reaction uracil(in) = uracil(out). It carries out the reaction (R)-noradrenaline(out) = (R)-noradrenaline(in). The catalysed reaction is dopamine(out) = dopamine(in). The enzyme catalyses serotonin(out) = serotonin(in). It catalyses the reaction tyramine(in) = tyramine(out). It carries out the reaction ATP(in) = ATP(out). In terms of biological role, uniporter that mediates the facilitative transport of nucleoside across lysosomal and mitochondrial membranes. Functions as a non-electrogenic Na(+)-independent transporter. Substrate transport is pH-dependent and enhanced under acidic condition, probably reflecting the location of the transporter in acidic intracellular compartments. Proton is not a cotransporting ion but most likely change the ionization state of the transporter which dictates transport-permissible/impermissible conformation for nucleoside translocation. May direct the nucleoside transport from lysosomes to cytosol or cytosol to mitochondria to facilitate the fundamental function of salvage synthesis of nucleic acids. Involved in the transport of nucleosides (adenosine, guanosine, uridine, thymidine, cytidine and inosine) and deoxynucleosides (deoxyadenosine, deoxycytidine). Also mediates transport of purine nucleobases (adenine, guanine), and pyrimidine nucleobases (uracil). Also able to transport monoamine neurotransmitters dopamine, serotonin, noradrenaline and tyramine. Capable of transporting ATP. Mediates nucleoside export from lysosomes in macrophages, which regulates macrophage functions and numbers. The protein is Equilibrative nucleoside transporter 3 of Mus musculus (Mouse).